The chain runs to 299 residues: Bifunctional protein FolD (299 aa).

Residues 164 to 166 and isoleucine 234 contribute to the NADP(+) site; that span reads GRS.

The protein belongs to the tetrahydrofolate dehydrogenase/cyclohydrolase family. As to quaternary structure, homodimer.

The enzyme catalyses (6R)-5,10-methylene-5,6,7,8-tetrahydrofolate + NADP(+) = (6R)-5,10-methenyltetrahydrofolate + NADPH. It carries out the reaction (6R)-5,10-methenyltetrahydrofolate + H2O = (6R)-10-formyltetrahydrofolate + H(+). Its pathway is one-carbon metabolism; tetrahydrofolate interconversion. In terms of biological role, catalyzes the oxidation of 5,10-methylenetetrahydrofolate to 5,10-methenyltetrahydrofolate and then the hydrolysis of 5,10-methenyltetrahydrofolate to 10-formyltetrahydrofolate. The chain is Bifunctional protein FolD from Christiangramia forsetii (strain DSM 17595 / CGMCC 1.15422 / KT0803) (Gramella forsetii).